The chain runs to 384 residues: Glucose-1-phosphate adenylyltransferase (384 aa).

Residues Tyr-103, Gly-168, 183-184 (EK), and Ser-194 contribute to the alpha-D-glucose 1-phosphate site.

It belongs to the bacterial/plant glucose-1-phosphate adenylyltransferase family. As to quaternary structure, homotetramer.

It carries out the reaction alpha-D-glucose 1-phosphate + ATP + H(+) = ADP-alpha-D-glucose + diphosphate. It participates in glycan biosynthesis; glycogen biosynthesis. Functionally, involved in the biosynthesis of ADP-glucose, a building block required for the elongation reactions to produce glycogen. Catalyzes the reaction between ATP and alpha-D-glucose 1-phosphate (G1P) to produce pyrophosphate and ADP-Glc. The protein is Glucose-1-phosphate adenylyltransferase of Fusobacterium nucleatum subsp. nucleatum (strain ATCC 25586 / DSM 15643 / BCRC 10681 / CIP 101130 / JCM 8532 / KCTC 2640 / LMG 13131 / VPI 4355).